The following is a 263-amino-acid chain: NADH dehydrogenase [ubiquinone] iron-sulfur protein 3, mitochondrial (263 aa).

Residues 1 to 35 (MVAAVARLWWRGLLGASALTRGAGRPSVLLLPVRR) constitute a mitochondrion transit peptide.

This sequence belongs to the complex I 30 kDa subunit family. In terms of assembly, core subunit of respiratory chain NADH dehydrogenase (Complex I) which is composed of 45 different subunits. Interacts with NDUFAF3. Interacts with RAB5IF. Found in subcomplexes containing subunits NDUFS2, MT-ND1 and NDUFA13.

It is found in the mitochondrion inner membrane. It catalyses the reaction a ubiquinone + NADH + 5 H(+)(in) = a ubiquinol + NAD(+) + 4 H(+)(out). In terms of biological role, core subunit of the mitochondrial membrane respiratory chain NADH dehydrogenase (Complex I) which catalyzes electron transfer from NADH through the respiratory chain, using ubiquinone as an electron acceptor. Essential for the catalytic activity and assembly of complex I. In Pongo pygmaeus (Bornean orangutan), this protein is NADH dehydrogenase [ubiquinone] iron-sulfur protein 3, mitochondrial (NDUFS3).